The chain runs to 368 residues: Ferrochelatase (368 aa).

Fe cation contacts are provided by His-209 and Glu-290. The disordered stretch occupies residues 341–368 (ADLGGGREATGQAAERSRQRALALGAKQ).

The protein belongs to the ferrochelatase family.

It is found in the cytoplasm. It catalyses the reaction heme b + 2 H(+) = protoporphyrin IX + Fe(2+). It functions in the pathway porphyrin-containing compound metabolism; protoheme biosynthesis; protoheme from protoporphyrin-IX: step 1/1. Its function is as follows. Catalyzes the ferrous insertion into protoporphyrin IX. This is Ferrochelatase from Nitrosococcus oceani (strain ATCC 19707 / BCRC 17464 / JCM 30415 / NCIMB 11848 / C-107).